A 551-amino-acid polypeptide reads, in one-letter code: Putative ABC transporter ATP-binding protein BT9727_3105 (551 aa).

2 consecutive ABC transporter domains span residues 5 to 243 (AEIN…FRPF) and 293 to 525 (LSAE…SINR). ATP contacts are provided by residues 39–46 (GGSGSGKT) and 327–334 (GKNGTGKS).

It belongs to the ABC transporter superfamily.

It is found in the cell membrane. Its function is as follows. Probably part of an ABC transporter complex. Responsible for energy coupling to the transport system. This Bacillus thuringiensis subsp. konkukian (strain 97-27) protein is Putative ABC transporter ATP-binding protein BT9727_3105.